Here is a 169-residue protein sequence, read N- to C-terminus: MSEKALTLKQSGVRWLWLAIVIFLADIGIKYVVMNNMGYGWANRIEILPFFNLLYVHNYGAAFSFLSDQAGWQRWLFTGIAFVVTGLLTYWMSKLPAKEKWNNIAYAMIIGGAVGNVFDRVIHGFVVDYLDFYWGNYHWPAFNLADMAICLGAAMIILDGFRKKDTAKA.

Helical transmembrane passes span 15–35, 47–67, 75–95, and 107–127; these read WLWL…VVMN, ILPF…SFLS, WLFT…MSKL, and AMII…GFVV. Active-site residues include Asp128 and Asp146. A helical membrane pass occupies residues 141–161; the sequence is AFNLADMAICLGAAMIILDGF.

Belongs to the peptidase A8 family.

The protein localises to the cell inner membrane. It carries out the reaction Release of signal peptides from bacterial membrane prolipoproteins. Hydrolyzes -Xaa-Yaa-Zaa-|-(S,diacylglyceryl)Cys-, in which Xaa is hydrophobic (preferably Leu), and Yaa (Ala or Ser) and Zaa (Gly or Ala) have small, neutral side chains.. The protein operates within protein modification; lipoprotein biosynthesis (signal peptide cleavage). Functionally, this protein specifically catalyzes the removal of signal peptides from prolipoproteins. This chain is Lipoprotein signal peptidase, found in Vibrio parahaemolyticus serotype O3:K6 (strain RIMD 2210633).